A 314-amino-acid chain; its full sequence is Ribosomal RNA small subunit methyltransferase H (314 aa).

Residues 36–38 (GGH), D56, F80, D102, and Q109 each bind S-adenosyl-L-methionine. Positions 278-300 (GGRSLKSIGKMKPSEEEVADNPR) are disordered. Positions 289–300 (KPSEEEVADNPR) are enriched in basic and acidic residues.

This sequence belongs to the methyltransferase superfamily. RsmH family.

Its subcellular location is the cytoplasm. It catalyses the reaction cytidine(1402) in 16S rRNA + S-adenosyl-L-methionine = N(4)-methylcytidine(1402) in 16S rRNA + S-adenosyl-L-homocysteine + H(+). Specifically methylates the N4 position of cytidine in position 1402 (C1402) of 16S rRNA. In Photorhabdus laumondii subsp. laumondii (strain DSM 15139 / CIP 105565 / TT01) (Photorhabdus luminescens subsp. laumondii), this protein is Ribosomal RNA small subunit methyltransferase H.